Here is a 105-residue protein sequence, read N- to C-terminus: Large ribosomal subunit protein uL23 (105 aa).

It belongs to the universal ribosomal protein uL23 family. As to quaternary structure, part of the 50S ribosomal subunit. Contacts protein L29, and trigger factor when it is bound to the ribosome.

Its function is as follows. One of the early assembly proteins it binds 23S rRNA. One of the proteins that surrounds the polypeptide exit tunnel on the outside of the ribosome. Forms the main docking site for trigger factor binding to the ribosome. The polypeptide is Large ribosomal subunit protein uL23 (Janthinobacterium sp. (strain Marseille) (Minibacterium massiliensis)).